A 330-amino-acid polypeptide reads, in one-letter code: Methionyl-tRNA formyltransferase (330 aa).

121 to 124 (SLLP) is a (6S)-5,6,7,8-tetrahydrofolate binding site.

Belongs to the Fmt family.

It catalyses the reaction L-methionyl-tRNA(fMet) + (6R)-10-formyltetrahydrofolate = N-formyl-L-methionyl-tRNA(fMet) + (6S)-5,6,7,8-tetrahydrofolate + H(+). Its function is as follows. Attaches a formyl group to the free amino group of methionyl-tRNA(fMet). The formyl group appears to play a dual role in the initiator identity of N-formylmethionyl-tRNA by promoting its recognition by IF2 and preventing the misappropriation of this tRNA by the elongation apparatus. This chain is Methionyl-tRNA formyltransferase, found in Burkholderia cenocepacia (strain HI2424).